A 1288-amino-acid polypeptide reads, in one-letter code: Contactin-associated protein-like 3 (1288 aa).

The first 25 residues, 1–25 (MASVAWAVLKVLLLLPTQTWSPVGA), serve as a signal peptide directing secretion. The Extracellular segment spans residues 26-1245 (GNPPDCDAPL…LVNADRRDSA (1220 aa)). The F5/8 type C domain occupies 31–177 (CDAPLASALP…IGMRIEVYGC (147 aa)). Cys-31 and Cys-177 form a disulfide bridge. Laminin G-like domains follow at residues 183 to 364 (VVYF…SFSC) and 370 to 545 (VPVT…IDSC). Residues Asn-285, Asn-359, Asn-441, and Asn-497 are each glycosylated (N-linked (GlcNAc...) asparagine). Cys-332 and Cys-364 form a disulfide bridge. Intrachain disulfides connect Cys-513/Cys-545, Cys-551/Cys-562, Cys-556/Cys-571, and Cys-573/Cys-583. An EGF-like 1 domain is found at 551-583 (CLPSYCEHGGECSQSWDTFSCDCLGTGYTGETC). Positions 584–792 (HSSLYEQSCE…LLCRGDQSFW (209 aa)) constitute a Fibrinogen C-terminal domain. Asn-623 and Asn-706 each carry an N-linked (GlcNAc...) asparagine glycan. Residues 793–958 (NSASFNTETS…TVTPGVEPGC (166 aa)) form the Laminin G-like 3 domain. Disulfide bonds link Cys-931–Cys-958, Cys-962–Cys-975, Cys-969–Cys-984, and Cys-986–Cys-996. The EGF-like 2 domain maps to 962-996 (CSTYGHLCRNGGRCREKRRGVTCDCAFSAYDGPFC). One can recognise a Laminin G-like 4 domain in the interval 1015-1203 (QEHYTLSENS…RGHVAPMARC (189 aa)). N-linked (GlcNAc...) asparagine glycans are attached at residues Asn-1023, Asn-1073, and Asn-1120. Residues Cys-1167 and Cys-1203 are joined by a disulfide bond. Residues 1215-1236 (ELAPRLAGGAGRSGPADEGEPL) form a disordered region. The chain crosses the membrane as a helical span at residues 1246 to 1266 (VIGGVIAVVIFILLCITAIAI). Over 1267-1288 (RIYQQRKLRKENESKVSKKEEC) the chain is Cytoplasmic.

Belongs to the neurexin family.

It localises to the cell membrane. The protein resides in the secreted. The sequence is that of Contactin-associated protein-like 3 (CNTNAP3) from Homo sapiens (Human).